Reading from the N-terminus, the 102-residue chain is Exocrine gland-secreted peptide 1 (102 aa).

An N-terminal signal peptide occupies residues 1–22 (MTSLPVLLFLIILLLPSMITEG). A disulfide bridge links Cys-63 with Cys-95.

It belongs to the exocrine gland-secreted peptide family. In terms of assembly, monomer. Expressed in the extraorbital lacrimal gland from where it is secreted into tears.

It localises to the secreted. In terms of biological role, male-specific phermone which is recognized by the Vmn2r116/V2rp5 receptor in the vomeronasal organ (VNO) and enhances female sexual receptive behavior (lordosis) upon male mounting, resulting in successful copulation. The sequence is that of Exocrine gland-secreted peptide 1 from Mus musculus (Mouse).